The sequence spans 290 residues: MNFGNVSTAMITPFDNKGNVDFQKLSTLIDYLLKNGTDSLVVAGTTGESPTLSTEEKIALFEYTVKEVNGRVPVIAGTGSNNTKDSIKLTKKAEEAGVDAVMLVTPYYNKPSQEGMYQHFKAIAAETSLPVMLYNVPGRTVASLAPETTIRLAADIPNVVAIKEASGDLEAITKIIAETPEDFYVYSGDDALTLPILSVGGRGVVSVASHIAGTDMQQMIKNYTNGQTANAALIHQKLLPIMKELFKAPNPAPVKTALQLRGLDVGSVRLPLVPLTEDERLSLSSTISEL.

Residue threonine 46 participates in pyruvate binding. The active-site Proton donor/acceptor is tyrosine 134. The Schiff-base intermediate with substrate role is filled by lysine 163. Residue valine 205 coordinates pyruvate.

Belongs to the DapA family. As to quaternary structure, homotetramer; dimer of dimers.

It is found in the cytoplasm. The enzyme catalyses L-aspartate 4-semialdehyde + pyruvate = (2S,4S)-4-hydroxy-2,3,4,5-tetrahydrodipicolinate + H2O + H(+). The protein operates within amino-acid biosynthesis; L-lysine biosynthesis via DAP pathway; (S)-tetrahydrodipicolinate from L-aspartate: step 3/4. Catalyzes the condensation of (S)-aspartate-beta-semialdehyde [(S)-ASA] and pyruvate to 4-hydroxy-tetrahydrodipicolinate (HTPA). The polypeptide is 4-hydroxy-tetrahydrodipicolinate synthase (Bacillus subtilis (strain 168)).